Consider the following 62-residue polypeptide: Photosystem II reaction center protein Z (62 aa).

2 consecutive transmembrane segments (helical) span residues Ala-8–Ala-28 and Phe-41–Val-61.

Belongs to the PsbZ family. PSII is composed of 1 copy each of membrane proteins PsbA, PsbB, PsbC, PsbD, PsbE, PsbF, PsbH, PsbI, PsbJ, PsbK, PsbL, PsbM, PsbT, PsbY, PsbZ, Psb30/Ycf12, at least 3 peripheral proteins of the oxygen-evolving complex and a large number of cofactors. It forms dimeric complexes.

The protein localises to the plastid. It localises to the chloroplast thylakoid membrane. May control the interaction of photosystem II (PSII) cores with the light-harvesting antenna, regulates electron flow through the 2 photosystem reaction centers. PSII is a light-driven water plastoquinone oxidoreductase, using light energy to abstract electrons from H(2)O, generating a proton gradient subsequently used for ATP formation. The polypeptide is Photosystem II reaction center protein Z (Nephroselmis olivacea (Green alga)).